A 299-amino-acid chain; its full sequence is NAD kinase (299 aa).

Catalysis depends on D78, which acts as the Proton acceptor. NAD(+)-binding positions include 78–79 (DG), 151–152 (ND), K162, R179, D181, 192–197 (TAYALS), and Q252.

It belongs to the NAD kinase family. A divalent metal cation is required as a cofactor.

It is found in the cytoplasm. It carries out the reaction NAD(+) + ATP = ADP + NADP(+) + H(+). Involved in the regulation of the intracellular balance of NAD and NADP, and is a key enzyme in the biosynthesis of NADP. Catalyzes specifically the phosphorylation on 2'-hydroxyl of the adenosine moiety of NAD to yield NADP. The sequence is that of NAD kinase from Coxiella burnetii (strain CbuG_Q212) (Coxiella burnetii (strain Q212)).